The primary structure comprises 294 residues: Methionine aminopeptidase (294 aa).

Position 65 (His-65) interacts with substrate. 3 residues coordinate a divalent metal cation: Asp-85, Asp-96, and His-156. His-164 provides a ligand contact to substrate. A divalent metal cation-binding residues include Glu-189 and Glu-279.

The protein belongs to the peptidase M24A family. Methionine aminopeptidase archaeal type 2 subfamily. As to quaternary structure, monomer. Co(2+) serves as cofactor. The cofactor is Zn(2+). Requires Mn(2+) as cofactor. It depends on Fe(2+) as a cofactor.

It carries out the reaction Release of N-terminal amino acids, preferentially methionine, from peptides and arylamides.. Removes the N-terminal methionine from nascent proteins. The N-terminal methionine is often cleaved when the second residue in the primary sequence is small and uncharged (Met-Ala-, Cys, Gly, Pro, Ser, Thr, or Val). This chain is Methionine aminopeptidase, found in Methanocaldococcus jannaschii (strain ATCC 43067 / DSM 2661 / JAL-1 / JCM 10045 / NBRC 100440) (Methanococcus jannaschii).